A 505-amino-acid polypeptide reads, in one-letter code: Succinyl-CoA:acetate CoA-transferase (505 aa).

269–273 provides a ligand contact to CoA; that stretch reads GVGNV. The 5-glutamyl coenzyme A thioester intermediate role is filled by Glu-294. CoA contacts are provided by Ile-364, Asn-384, Gly-388, and Lys-408.

The protein belongs to the acetyl-CoA hydrolase/transferase family. In terms of assembly, homodimer.

It carries out the reaction succinyl-CoA + acetate = succinate + acetyl-CoA. It participates in metabolic intermediate biosynthesis; acetyl-CoA biosynthesis. With respect to regulation, subject to competitive inhibition by coenzyme A (CoA). Utilizes succinyl-CoA to convert toxic acetate to acetyl-CoA and succinate. Required for growth on acetic acid and for resistance to high levels of acetic acid. Also has low activity with acetoacetate as substrate. In Acetobacter aceti, this protein is Succinyl-CoA:acetate CoA-transferase.